A 423-amino-acid chain; its full sequence is Adenylosuccinate synthetase (423 aa).

The active-site Proton acceptor is the Asp12. Mg(2+) contacts are provided by Asp12 and Gly39. IMP is bound by residues 37–40 (NAGH), Thr129, Arg143, Asn221, Thr236, and Arg300. 39–41 (GHS) serves as a coordination point for GTP. Catalysis depends on His40, which acts as the Proton donor. 296–302 (VSTGRKR) serves as a coordination point for substrate. GTP contacts are provided by residues Arg302, 328 to 330 (KLD), and 412 to 414 (GTG).

Belongs to the adenylosuccinate synthetase family. In terms of assembly, homodimer. Mg(2+) is required as a cofactor.

The protein resides in the cytoplasm. It catalyses the reaction IMP + L-aspartate + GTP = N(6)-(1,2-dicarboxyethyl)-AMP + GDP + phosphate + 2 H(+). The protein operates within purine metabolism; AMP biosynthesis via de novo pathway; AMP from IMP: step 1/2. In terms of biological role, plays an important role in the de novo pathway and in the salvage pathway of purine nucleotide biosynthesis. Catalyzes the first committed step in the biosynthesis of AMP from IMP. This Pyricularia oryzae (strain 70-15 / ATCC MYA-4617 / FGSC 8958) (Rice blast fungus) protein is Adenylosuccinate synthetase.